Here is a 290-residue protein sequence, read N- to C-terminus: Coiled-coil domain-containing protein 137 (290 aa).

Disordered stretches follow at residues 1-92 (MARP…EAQV), 98-117 (LEKEAKGEEPDIAVPKFKQR), 139-181 (LSKN…EARA), and 269-290 (RQEMTPAQPPGSSFQRQGHACL). A compositionally biased stretch (low complexity) spans 20–39 (SGQPQGRRQQQAQGQQRSAS). Positions 56-79 (KNQDEQEIPFRLREIMRSRQEMKK) are enriched in basic and acidic residues. The stretch at 66 to 89 (RLREIMRSRQEMKKTLSNKKRKKE) forms a coiled coil. Over residues 154–163 (PKKEKSERKK) the composition is skewed to basic and acidic residues. Residues 155–192 (KKEKSERKKAFQKRRLEKAQRKREARAVDRLEQELLKD) adopt a coiled-coil conformation. Basic residues predominate over residues 164–178 (AFQKRRLEKAQRKRE).

The protein resides in the chromosome. The protein is Coiled-coil domain-containing protein 137 (Ccdc137) of Mus musculus (Mouse).